Consider the following 888-residue polypeptide: Collagen alpha chain (888 aa).

Positions 1 to 627 (APGPDGLTGT…GPPGQPGMSE (627 aa)) are disordered. A Collagen-like 1 domain is found at 3–60 (GPDGLTGTKGSMGEPGTDGEPGSPGPQGAKGETGLAGRRGLTGIPGKQGRQGERGEPG). Low complexity-rich tracts occupy residues 59 to 73 (PGTA…QPGT) and 148 to 164 (TPGL…MGPI). The segment covering 179–190 (RGYDGKDGEPGR) has biased composition (basic and acidic residues). A compositionally biased stretch (low complexity) spans 194–203 (PGPIGQPGIP). A compositionally biased stretch (pro residues) spans 311 to 320 (SGPPGPPGPS). Positions 422–440 (SGSRGAQGPPGAPGSSGQN) are enriched in low complexity. Positions 441-450 (GVDGGTGENG) are enriched in gly residues. Composition is skewed to low complexity over residues 460 to 475 (ESGA…SAGP) and 508 to 518 (EPGPQGDQGPK). One can recognise a Collagen-like 2 domain in the interval 513 to 571 (GDQGPKGQKGEVGPVGEKGDKGWTGTPGDPGPQGDRGEPGPPGRDGVDGPPGPRGAPGE). A compositionally biased stretch (pro residues) spans 610–622 (PPGPPGPPGPPGQ). The Fibrillar collagen NC1 domain occupies 661 to 884 (ENVLKDLDEK…KLEIGPACFH (224 aa)). Intrachain disulfides connect cysteine 731/cysteine 882 and cysteine 793/cysteine 833.

It belongs to the fibrillar collagen family. As to expression, component of the acid-insoluble organic matrix of the aragonitic skeleton (at protein level).

It is found in the secreted. This Acropora millepora (Staghorn coral) protein is Collagen alpha chain.